The primary structure comprises 256 residues: uncharacterized protein (256 aa).

4 helical membrane-spanning segments follow: residues 5-25 (FIEG…NYLL), 30-50 (ILST…LKVF), 64-84 (VVIF…DPAI), and 105-125 (VGIT…LGII). Residues 198–256 (EKTKSLDSISHSSSSSRKSSTELKIPPVETRIVAEIPVPSSVKRRRHRPNKSMGSIKNS) form a disordered region. The span at 203–215 (LDSISHSSSSSRK) shows a compositional bias: low complexity. Phosphoserine is present on residues S210 and S211.

The protein resides in the endoplasmic reticulum membrane. Its subcellular location is the nucleus membrane. This is an uncharacterized protein from Schizosaccharomyces pombe (strain 972 / ATCC 24843) (Fission yeast).